Consider the following 183-residue polypeptide: Cyanate hydratase (183 aa).

Residues Arg-118, Glu-121, and Ser-144 contribute to the active site.

This sequence belongs to the cyanase family.

It carries out the reaction cyanate + hydrogencarbonate + 3 H(+) = NH4(+) + 2 CO2. Its function is as follows. Catalyzes the reaction of cyanate with bicarbonate to produce ammonia and carbon dioxide. The protein is Cyanate hydratase of Cryptococcus neoformans var. neoformans serotype D (strain B-3501A) (Filobasidiella neoformans).